The chain runs to 251 residues: Triosephosphate isomerase (251 aa).

9 to 11 (NWK) provides a ligand contact to substrate. Catalysis depends on histidine 95, which acts as the Electrophile. The active-site Proton acceptor is the glutamate 167. Substrate-binding positions include glycine 173, serine 213, and 234–235 (GG). Serine 213 carries the post-translational modification Phosphoserine.

Belongs to the triosephosphate isomerase family. Homodimer.

Its subcellular location is the cytoplasm. The enzyme catalyses D-glyceraldehyde 3-phosphate = dihydroxyacetone phosphate. It functions in the pathway carbohydrate biosynthesis; gluconeogenesis. The protein operates within carbohydrate degradation; glycolysis; D-glyceraldehyde 3-phosphate from glycerone phosphate: step 1/1. In terms of biological role, involved in the gluconeogenesis. Catalyzes stereospecifically the conversion of dihydroxyacetone phosphate (DHAP) to D-glyceraldehyde-3-phosphate (G3P). The polypeptide is Triosephosphate isomerase (Shouchella clausii (strain KSM-K16) (Alkalihalobacillus clausii)).